Consider the following 190-residue polypeptide: MLYLASRSPRRHELLQRLDVPFQTLELDVPEVRAPGESPEHYVHRVALDKARAGLALVQADDAQAIVLGSDTEVVLGERVFGKPVDVDDAIAMLTVLAGRTHQVLTAVVLVGAQRPPLQALVVSEVTFDALDATRIAAYAASGEPMGKAGAYAIQGRAERFITHLSGSYSGVMGLPLFQTSQLLTAFGAH.

Aspartate 71 (proton acceptor) is an active-site residue.

Belongs to the Maf family. YhdE subfamily. The cofactor is a divalent metal cation.

The protein resides in the cytoplasm. The catalysed reaction is dTTP + H2O = dTMP + diphosphate + H(+). It carries out the reaction UTP + H2O = UMP + diphosphate + H(+). Nucleoside triphosphate pyrophosphatase that hydrolyzes dTTP and UTP. May have a dual role in cell division arrest and in preventing the incorporation of modified nucleotides into cellular nucleic acids. The sequence is that of dTTP/UTP pyrophosphatase from Xanthomonas campestris pv. campestris (strain ATCC 33913 / DSM 3586 / NCPPB 528 / LMG 568 / P 25).